Here is a 232-residue protein sequence, read N- to C-terminus: dTTP/UTP pyrophosphatase (232 aa).

D103 acts as the Proton acceptor in catalysis.

Belongs to the Maf family. YhdE subfamily. It depends on a divalent metal cation as a cofactor.

Its subcellular location is the cytoplasm. It carries out the reaction dTTP + H2O = dTMP + diphosphate + H(+). The catalysed reaction is UTP + H2O = UMP + diphosphate + H(+). Its function is as follows. Nucleoside triphosphate pyrophosphatase that hydrolyzes dTTP and UTP. May have a dual role in cell division arrest and in preventing the incorporation of modified nucleotides into cellular nucleic acids. This chain is dTTP/UTP pyrophosphatase, found in Bartonella henselae (strain ATCC 49882 / DSM 28221 / CCUG 30454 / Houston 1) (Rochalimaea henselae).